A 457-amino-acid polypeptide reads, in one-letter code: Protein translocase subunit SecY (457 aa).

Transmembrane regions (helical) follow at residues Ile-17–Gly-37, Ile-75–Phe-95, Leu-120–Met-140, Val-163–Gly-183, Ile-195–Phe-215, Ile-230–Ile-250, Val-287–Leu-307, Val-326–Thr-346, Leu-386–Leu-406, and Val-412–Met-432.

This sequence belongs to the SecY/SEC61-alpha family. As to quaternary structure, component of the Sec protein translocase complex. Heterotrimer consisting of SecY, SecE and SecG subunits. The heterotrimers can form oligomers, although 1 heterotrimer is thought to be able to translocate proteins. Interacts with the ribosome. Interacts with SecDF, and other proteins may be involved. Interacts with SecA.

It is found in the cell inner membrane. Its function is as follows. The central subunit of the protein translocation channel SecYEG. Consists of two halves formed by TMs 1-5 and 6-10. These two domains form a lateral gate at the front which open onto the bilayer between TMs 2 and 7, and are clamped together by SecE at the back. The channel is closed by both a pore ring composed of hydrophobic SecY resides and a short helix (helix 2A) on the extracellular side of the membrane which forms a plug. The plug probably moves laterally to allow the channel to open. The ring and the pore may move independently. The sequence is that of Protein translocase subunit SecY from Chlamydia muridarum (strain MoPn / Nigg).